A 430-amino-acid polypeptide reads, in one-letter code: Adenylosuccinate synthetase (430 aa).

Residues 12–18 and 40–42 each bind GTP; these read GDEGKGK and GHT. Aspartate 13 serves as the catalytic Proton acceptor. The Mg(2+) site is built by aspartate 13 and glycine 40. IMP contacts are provided by residues 13 to 16, 38 to 41, threonine 128, arginine 142, glutamine 223, threonine 238, and arginine 302; these read DEGK and NAGH. The Proton donor role is filled by histidine 41. 298–304 lines the substrate pocket; the sequence is TTTGRPR. GTP-binding positions include arginine 304, 330–332, and 412–414; these read SID and SVG.

Belongs to the adenylosuccinate synthetase family. As to quaternary structure, homodimer. It depends on Mg(2+) as a cofactor.

The protein localises to the cytoplasm. The catalysed reaction is IMP + L-aspartate + GTP = N(6)-(1,2-dicarboxyethyl)-AMP + GDP + phosphate + 2 H(+). It participates in purine metabolism; AMP biosynthesis via de novo pathway; AMP from IMP: step 1/2. Functionally, plays an important role in the de novo pathway of purine nucleotide biosynthesis. Catalyzes the first committed step in the biosynthesis of AMP from IMP. The sequence is that of Adenylosuccinate synthetase from Streptococcus pyogenes serotype M3 (strain ATCC BAA-595 / MGAS315).